A 150-amino-acid polypeptide reads, in one-letter code: Large ribosomal subunit protein bL9 (150 aa).

The protein belongs to the bacterial ribosomal protein bL9 family.

In terms of biological role, binds to the 23S rRNA. The chain is Large ribosomal subunit protein bL9 from Janthinobacterium sp. (strain Marseille) (Minibacterium massiliensis).